A 419-amino-acid chain; its full sequence is tRNA(Ile)-lysidine synthase (419 aa).

Residue 31 to 36 (SGGGDS) participates in ATP binding.

It belongs to the tRNA(Ile)-lysidine synthase family.

It localises to the cytoplasm. It catalyses the reaction cytidine(34) in tRNA(Ile2) + L-lysine + ATP = lysidine(34) in tRNA(Ile2) + AMP + diphosphate + H(+). Its function is as follows. Ligates lysine onto the cytidine present at position 34 of the AUA codon-specific tRNA(Ile) that contains the anticodon CAU, in an ATP-dependent manner. Cytidine is converted to lysidine, thus changing the amino acid specificity of the tRNA from methionine to isoleucine. The sequence is that of tRNA(Ile)-lysidine synthase from Ruegeria pomeroyi (strain ATCC 700808 / DSM 15171 / DSS-3) (Silicibacter pomeroyi).